Consider the following 537-residue polypeptide: MSGQQRGSVILVPEHLAGALTKLMSDFITGQDVTLSGGNIAVKIRDAINQTPGGGDVAILSSLFALWNALPTSGRQSSRDDLIPAAVQALTTAHNLCLGVIPGETSHKDTPESLLRAIVTGLQKLWVDSCGCPECLQCLKGLKAIKPGLYEIPRIIPHTKQCSPVNLLNMLVHKLVALRGHVQLAYDARVLTPDFHEIPDLDDSDAVFARTLLAALFHLNMFFILKDYITQDSMSLKQALSGHWMSATGNPLPAAPETLRNYLEAFRNSDNHFYLPTTGPLNTFKFPEELLGRVVVIDSSLCAASHVQDVITRGVGAGVPRPRFLALPPAPSREPQQTCSQLTSRGNESSRRNLGQPGGTSPAVPPVCPIVSLAASRAKQNRGGTGSLHLAQPEGTSPAVSPVCPIASPAASRSKQHCGVTGSSQAAPSSSSVTPVASLSGDLEEEEEGSRESPSPPSSKKGAEEFEAWLEAQDANLEDVQREFSGLRVIGDEDEDGSEDGEFSDLDLSDSDHEGDEGGGAVGGGRSLHSLYSLSVV.

Disordered regions lie at residues 322–466 and 486–537; these read PRFL…AEEF and GLRV…LSVV. Positions 334–347 are enriched in polar residues; it reads EPQQTCSQLTSRGN. Positions 420 to 441 are enriched in low complexity; it reads VTGSSQAAPSSSSVTPVASLSG. The span at 492–517 shows a compositional bias: acidic residues; sequence DEDEDGSEDGEFSDLDLSDSDHEGDE.

Belongs to the lymphocryptovirus BRRF2 family.

The protein localises to the virion tegument. This Homo sapiens (Human) protein is Tegument protein BRRF2.